The primary structure comprises 495 residues: Probable serine/threonine-protein kinase DDB_G0292354 (495 aa).

Residues 16 to 275 enclose the Protein kinase domain; the sequence is WTVVKKIGQG…PNYVFLQTLL (260 aa). ATP-binding positions include 22–30 and Lys45; that span reads IGQGAFGEI. Catalysis depends on Asp136, which acts as the Proton acceptor. Residues 293–469 are disordered; that stretch reads EVQTNSGASS…NGNGSNSQPI (177 aa). Low complexity-rich tracts occupy residues 295–333 and 354–364; these read QTNSGASSSSSNTTQQQQQQQQQQQQRNLNQSGLNNSSA and NNSNNNNNNNN. Residues 385–395 are compositionally biased toward polar residues; sequence ESNSQIANSSE. Residues 435–466 are compositionally biased toward low complexity; sequence SNNNNINNNNNNYNNNNNNNNNSHMNGNGSNS.

It belongs to the protein kinase superfamily. CK1 Ser/Thr protein kinase family.

This is Probable serine/threonine-protein kinase DDB_G0292354 from Dictyostelium discoideum (Social amoeba).